The following is a 363-amino-acid chain: Lactose transport ATP-binding protein LacK (363 aa).

Residues 4–234 (VRLTDIRKSY…PDNMFVAGFI (231 aa)) form the ABC transporter domain. 36 to 43 (GPSGCGKS) is a binding site for ATP.

This sequence belongs to the ABC transporter superfamily.

It is found in the cell inner membrane. Its function is as follows. Part of the binding-protein-dependent transport system for lactose. Probably responsible for energy coupling to the transport system. This chain is Lactose transport ATP-binding protein LacK (lacK), found in Rhizobium radiobacter (Agrobacterium tumefaciens).